Consider the following 580-residue polypeptide: Probable inactive 1-aminocyclopropane-1-carboxylate synthase-like protein 2 (580 aa).

Positions 1 to 43 (MSENRNEGSSQAAKANSDTQTPSHFKVTHPRLRDQLKKKSSKK) are disordered. Residues 7-23 (EGSSQAAKANSDTQTPS) show a composition bias toward polar residues. Lys417 carries the N6-(pyridoxal phosphate)lysine modification.

Belongs to the class-I pyridoxal-phosphate-dependent aminotransferase family.

The protein is Probable inactive 1-aminocyclopropane-1-carboxylate synthase-like protein 2 (Accsl) of Mus musculus (Mouse).